A 255-amino-acid chain; its full sequence is Putative cysteine-rich repeat secretory protein 32 (255 aa).

The first 28 residues, 1-28 (MYSSYSLFKCLVCFYILGIQVLIHSVSS), serve as a signal peptide directing secretion. Gnk2-homologous domains follow at residues 35 to 136 (YLHH…TINS) and 143 to 252 (YENT…LYPF).

Belongs to the cysteine-rich repeat secretory protein family.

Its subcellular location is the secreted. The polypeptide is Putative cysteine-rich repeat secretory protein 32 (CRRSP32) (Arabidopsis thaliana (Mouse-ear cress)).